Here is a 361-residue protein sequence, read N- to C-terminus: 45 kDa calcium-binding protein (361 aa).

Residues 1–35 (MVWLVAMTSRQRSLCGLAAHGLWFLGLVLLMDATA) form the signal peptide. N-linked (GlcNAc...) asparagine glycosylation is present at Asn-39. EF-hand domains are found at residues 97–132 (RSRR…KTAE) and 136–171 (EAVK…SKGH). A Phosphoserine modification is found at Ser-98. Ca(2+) contacts are provided by Asp-110, Asn-112, Asp-114, Arg-116, Glu-121, Asp-149, Asp-151, Asp-153, His-155, and Glu-160. Position 192 is a phosphothreonine (Thr-192). 4 EF-hand domains span residues 196 to 231 (LGNL…HSRG), 232 to 267 (MLKF…TVEN), 277 to 312 (WVKD…MNEY), and 313 to 348 (NALN…FTGS). Asp-212 lines the Ca(2+) pocket. Position 216 is a phosphothreonine (Thr-216). 6 residues coordinate Ca(2+): Glu-219, Asp-245, Asp-247, Asp-249, Gln-251, and Glu-256. Thr-264 carries the post-translational modification Phosphothreonine. Ca(2+)-binding residues include Asp-290, Asn-292, and Asp-294. The residue at position 298 (Thr-298) is a Phosphothreonine. Residues Glu-301, Asp-326, Asn-328, Asn-330, His-332, and Glu-337 each contribute to the Ca(2+) site. Residues 308–361 (PMNEYNALNEAKQMIAIADENQNHHLEPEEILKYSEFFTGSKLMDYARNVHEEF) are necessary for intracellular retention in Golgi apparatus lumen.

This sequence belongs to the CREC family. A membrane-associated isoform interacts with STX3 and STXBP1. A membrane-associated isoform is expressed in acini of the pancreas (at protein level). Ubiquitous.

The protein resides in the golgi apparatus lumen. Its function is as follows. A membrane-associated isoform may be involved in the exocytosis of zymogens by pancreatic acini. May regulate calcium-dependent activities in the endoplasmic reticulum lumen or post-ER compartment. This Rattus norvegicus (Rat) protein is 45 kDa calcium-binding protein (Sdf4).